Reading from the N-terminus, the 261-residue chain is Carnitinyl-CoA dehydratase (261 aa).

Glu111 functions as the Nucleophile in the catalytic mechanism. Glu131 functions as the Proton acceptor in the catalytic mechanism.

Belongs to the enoyl-CoA hydratase/isomerase family.

It catalyses the reaction (R)-carnitinyl-CoA = crotonobetainyl-CoA + H2O. The protein operates within amine and polyamine metabolism; carnitine metabolism. Catalyzes the reversible dehydration of L-carnitinyl-CoA to crotonobetainyl-CoA. This chain is Carnitinyl-CoA dehydratase, found in Salmonella typhimurium (strain LT2 / SGSC1412 / ATCC 700720).